The following is a 674-amino-acid chain: PTS system glucose-specific EIIBCA component (674 aa).

In terms of domain architecture, PTS EIIB type-1 spans 1–89 (MASKLTTTSQ…LKLDGMKHFA (89 aa)). The active-site Phosphocysteine intermediate; for EIIB activity is the Cys-28. Positions 117–476 (EFLSDTFRPI…DAERDEAKAQ (360 aa)) constitute a PTS EIIC type-1 domain. 10 helical membrane-spanning segments follow: residues 126–146 (ILWA…ADTF), 162–182 (YVFL…MVGA), 193–213 (WIGA…LGSA), 225–245 (VLND…GLYW), 260–280 (MVFV…FLLG), 303–323 (FILS…GLHW), 344–364 (PMGA…LIAL), 376–396 (LGGM…YGVL), 409–429 (GCLV…AFVF), and 442–462 (LGYT…VLFF). In terms of domain architecture, PTS EIIA type-1 spans 542–646 (DPIFAAGKLG…PLITPVVVSN (105 aa)). The Tele-phosphohistidine intermediate; for EIIA activity role is filled by His-594.

It localises to the cell membrane. It carries out the reaction N(pros)-phospho-L-histidyl-[protein] + D-glucose(out) = D-glucose 6-phosphate(in) + L-histidyl-[protein]. The phosphoenolpyruvate-dependent sugar phosphotransferase system (sugar PTS), a major carbohydrate active transport system, catalyzes the phosphorylation of incoming sugar substrates concomitantly with their translocation across the cell membrane. This system is involved in glucose transport. This Corynebacterium glutamicum (Brevibacterium saccharolyticum) protein is PTS system glucose-specific EIIBCA component (ptsG).